Reading from the N-terminus, the 66-residue chain is MLKSFKNFTLEDMKAKRLELKKEYLDLRFKSIVGHVENPLKKREIRRDIARLNTIICEYELGIRKV.

Belongs to the universal ribosomal protein uL29 family.

The chain is Large ribosomal subunit protein uL29 from Borrelia garinii subsp. bavariensis (strain ATCC BAA-2496 / DSM 23469 / PBi) (Borreliella bavariensis).